A 398-amino-acid polypeptide reads, in one-letter code: 8-amino-7-oxononanoate synthase (398 aa).

A substrate-binding site is contributed by Arg-23. 110–111 (GY) is a binding site for pyridoxal 5'-phosphate. Substrate is bound at residue His-135. Positions 181, 209, and 237 each coordinate pyridoxal 5'-phosphate. Lys-240 carries the post-translational modification N6-(pyridoxal phosphate)lysine. A substrate-binding site is contributed by Thr-354.

Belongs to the class-II pyridoxal-phosphate-dependent aminotransferase family. BioF subfamily. As to quaternary structure, homodimer. The cofactor is pyridoxal 5'-phosphate.

The catalysed reaction is 6-carboxyhexanoyl-[ACP] + L-alanine + H(+) = (8S)-8-amino-7-oxononanoate + holo-[ACP] + CO2. It participates in cofactor biosynthesis; biotin biosynthesis. Catalyzes the decarboxylative condensation of pimeloyl-[acyl-carrier protein] and L-alanine to produce 8-amino-7-oxononanoate (AON), [acyl-carrier protein], and carbon dioxide. This chain is 8-amino-7-oxononanoate synthase, found in Anaeromyxobacter sp. (strain K).